A 367-amino-acid chain; its full sequence is Mannan endo-1,4-beta-mannosidase (367 aa).

The N-terminal stretch at 1 to 17 (MLLTALAVLFASTGCQA) is a signal peptide. Residues W79 and N176 each contribute to the substrate site. The Proton donor role is filled by E177. C192 and C259 are oxidised to a cystine. Positions 205, 240, and 279 each coordinate substrate. The active-site Nucleophile is the E308. W337 provides a ligand contact to substrate.

In terms of assembly, monomer. Post-translationally, the disulfide bond between Cys-192 and Cys-259 has not been observed in X-ray crystallography. This may be a consequence of the X-ray radiation.

It carries out the reaction Random hydrolysis of (1-&gt;4)-beta-D-mannosidic linkages in mannans, galactomannans and glucomannans.. Functionally, hydrolyzes 1,4-beta linked polysaccharide backbones of mannans. Hydrolyzes mannohexaose (M6) preferentially to mannotriose (M4) and less preferentially to mannotetraose (M3), mannopentaose (M5), and mannobiose (M2); hydrolyzes M5 preferentially to M2, and M3, and less preferentially to mannotetraose M4; hydrolyzes M4 preferentially to M3, and less preferentially to mannose (M1), plus very little M2. Does not hydrolyze mannobiose or mannotriose. Does not hydrolyze xlyan, starch, cellulose or galactose. This chain is Mannan endo-1,4-beta-mannosidase, found in Mytilus edulis (Blue mussel).